The following is a 270-amino-acid chain: ATP synthase subunit a 1 (270 aa).

5 consecutive transmembrane segments (helical) span residues 38-58 (VHIDSLFFSWFTGLIFLGIFY), 98-118 (IAPLALTIFCWVFLMNVMDLV), 143-163 (DVNITMAMALGVFALMIYYSI), 208-228 (LFGNMFAGEVVFILCAAMLPW), and 239-259 (AIFHILVITIQAFVFMMLTIV).

Belongs to the ATPase A chain family. In terms of assembly, F-type ATPases have 2 components, CF(1) - the catalytic core - and CF(0) - the membrane proton channel. CF(1) has five subunits: alpha(3), beta(3), gamma(1), delta(1), epsilon(1). CF(0) has three main subunits: a(1), b(2) and c(9-12). The alpha and beta chains form an alternating ring which encloses part of the gamma chain. CF(1) is attached to CF(0) by a central stalk formed by the gamma and epsilon chains, while a peripheral stalk is formed by the delta and b chains.

It is found in the cell inner membrane. In terms of biological role, key component of the proton channel; it plays a direct role in the translocation of protons across the membrane. The chain is ATP synthase subunit a 1 from Vibrio campbellii (strain ATCC BAA-1116).